The sequence spans 237 residues: Sugar fermentation stimulation protein homolog (237 aa).

Belongs to the SfsA family.

This chain is Sugar fermentation stimulation protein homolog, found in Azorhizobium caulinodans (strain ATCC 43989 / DSM 5975 / JCM 20966 / LMG 6465 / NBRC 14845 / NCIMB 13405 / ORS 571).